The chain runs to 609 residues: mRNA cap guanine-N(7) methyltransferase (609 aa).

Over residues 1–10 the composition is skewed to basic and acidic residues; the sequence is MASKEEERTG. The tract at residues 1–252 is disordered; the sequence is MASKEEERTG…EEDAMRNSQS (252 aa). 2 stretches are compositionally biased toward low complexity: residues 28–47 and 70–87; these read QPVV…ATPT and PQTT…QQKQ. Positions 148–163 are enriched in basic and acidic residues; sequence ANDRPISKRKRLEERH. Over residues 193–205 the composition is skewed to pro residues; sequence PRSPSPPLPPRSP. The span at 233–247 shows a compositional bias: basic and acidic residues; sequence RRQEERERALEEDAM. The 313-residue stretch at 278-590 folds into the mRNA cap 0 methyltransferase domain; sequence SKIKGLRSFN…KYTPLGFTSA (313 aa). An mRNA-binding site is contributed by 287 to 288; sequence NN. S-adenosyl-L-methionine contacts are provided by residues Lys291, Gly314, Asp338, Asp379, 422 to 424, and Tyr427; that span reads MFA.

Belongs to the class I-like SAM-binding methyltransferase superfamily. mRNA cap 0 methyltransferase family.

It is found in the nucleus. The enzyme catalyses a 5'-end (5'-triphosphoguanosine)-ribonucleoside in mRNA + S-adenosyl-L-methionine = a 5'-end (N(7)-methyl 5'-triphosphoguanosine)-ribonucleoside in mRNA + S-adenosyl-L-homocysteine. Responsible for methylating the 5'-cap structure of mRNAs. In Aspergillus niger (strain ATCC MYA-4892 / CBS 513.88 / FGSC A1513), this protein is mRNA cap guanine-N(7) methyltransferase (abd1).